A 1940-amino-acid polypeptide reads, in one-letter code: Cilia- and flagella-associated protein 74 (1940 aa).

The disordered stretch occupies residues 52–90; it reads GSPAVTLRRAKAAAAANGTSSPGIRGSPSPARGPGGRLP. Positions 63-90 are enriched in low complexity; that stretch reads AAAAANGTSSPGIRGSPSPARGPGGRLP. A coiled-coil region spans residues 100–159; that stretch reads ANVEQLKRRLQTVVAEVEGHQQRYDKVLLEANKATDLVHSMEAEIESLYVEAEELARRVP. Disordered stretches follow at residues 512 to 548, 1159 to 1336, 1373 to 1418, 1714 to 1737, and 1894 to 1940; these read VAGL…QSLT, SPHV…AAAE, PQSQ…AAPP, AGDK…GASK, and PGSR…KKAV. The segment covering 535 to 548 has biased composition (low complexity); that stretch reads SLTQQLAATQQSLT. A compositionally biased stretch (gly residues) spans 1205-1220; sequence DGGGGGAMANGNGSGG. Positions 1227-1236 are enriched in acidic residues; it reads DGEPEDGEGD. The span at 1260 to 1271 shows a compositional bias: gly residues; it reads GRGGRGGRGGAA. Acidic residues predominate over residues 1272–1282; the sequence is GEDEDEDEDAG. Low complexity predominate over residues 1287–1304; it reads RGKSSSSSKASSGRRSSS. Acidic residues predominate over residues 1321-1335; it reads VPDDDDADAEAEAAA. Low complexity predominate over residues 1373 to 1414; the sequence is PQSQNPTPSQSQSGQAPAASAPSDGASGAAAAAETAASSGPA. 2 stretches are compositionally biased toward pro residues: residues 1720–1731 and 1896–1912; these read TPAPGIKPPATP and SRPP…PAPE. Residues 1913 to 1929 are compositionally biased toward low complexity; sequence PVAASGPGAGAAGVKKL. Residues 1930-1940 are compositionally biased toward pro residues; it reads VPPPSPPKKAV.

The protein belongs to the CFAP74 family. Part of the PDCP1 complex composed of CFAP46, CFAP54, CFAP74 and CFAP221; the PDCP1 complex binds calmodulin.

Its subcellular location is the cytoplasm. The protein localises to the cytoskeleton. It localises to the cilium axoneme. Its function is as follows. As part of the central apparatus of the cilium axoneme may play a role in cilium movement and thereby cell motility. This is Cilia- and flagella-associated protein 74 from Chlamydomonas reinhardtii (Chlamydomonas smithii).